The primary structure comprises 241 residues: Lipopolysaccharide export system ATP-binding protein LptB (241 aa).

Positions 5 to 237 (LQAQSLFKSY…PMVRQVYLGD (233 aa)) constitute an ABC transporter domain. 37–44 (GPNGAGKT) is a binding site for ATP.

Belongs to the ABC transporter superfamily. Outer membrane lipopolysaccharide export (TC 1.B.42) family. As to quaternary structure, component of the lipopolysaccharide transport and assembly complex. The LptBFG transporter is composed of two ATP-binding proteins (LptB) and two transmembrane proteins (LptF and LptG).

The protein resides in the cytoplasm. It is found in the cell inner membrane. Functionally, part of the ABC transporter complex LptBFG involved in the translocation of lipopolysaccharide (LPS) from the inner membrane to the outer membrane. Probably responsible for energy coupling to the transport system. The polypeptide is Lipopolysaccharide export system ATP-binding protein LptB (lptB) (Acidithiobacillus ferridurans).